The sequence spans 156 residues: SCP2 sterol-binding domain-containing protein 1 (156 aa).

The 113-residue stretch at 44-156 (SFPVFQDIRL…ERVFKDWAKF (113 aa)) folds into the SCP2 domain.

The polypeptide is SCP2 sterol-binding domain-containing protein 1 (SCP2D1) (Homo sapiens (Human)).